Consider the following 403-residue polypeptide: Probable tRNA sulfurtransferase (403 aa).

Residues 60 to 165 (QLAEERLKPI…KEGVFLSCRT (106 aa)) enclose the THUMP domain. Residues 183–184 (ML), 208–209 (HF), Arg265, Gly287, and Gln296 contribute to the ATP site.

It belongs to the ThiI family.

The protein localises to the cytoplasm. It catalyses the reaction [ThiI sulfur-carrier protein]-S-sulfanyl-L-cysteine + a uridine in tRNA + 2 reduced [2Fe-2S]-[ferredoxin] + ATP + H(+) = [ThiI sulfur-carrier protein]-L-cysteine + a 4-thiouridine in tRNA + 2 oxidized [2Fe-2S]-[ferredoxin] + AMP + diphosphate. The enzyme catalyses [ThiS sulfur-carrier protein]-C-terminal Gly-Gly-AMP + S-sulfanyl-L-cysteinyl-[cysteine desulfurase] + AH2 = [ThiS sulfur-carrier protein]-C-terminal-Gly-aminoethanethioate + L-cysteinyl-[cysteine desulfurase] + A + AMP + 2 H(+). The protein operates within cofactor biosynthesis; thiamine diphosphate biosynthesis. Catalyzes the ATP-dependent transfer of a sulfur to tRNA to produce 4-thiouridine in position 8 of tRNAs, which functions as a near-UV photosensor. Also catalyzes the transfer of sulfur to the sulfur carrier protein ThiS, forming ThiS-thiocarboxylate. This is a step in the synthesis of thiazole, in the thiamine biosynthesis pathway. The sulfur is donated as persulfide by IscS. The protein is Probable tRNA sulfurtransferase of Listeria monocytogenes serotype 4a (strain HCC23).